A 383-amino-acid chain; its full sequence is S-adenosylmethionine synthase 1 (383 aa).

Position 15 (His-15) interacts with ATP. Asp-17 serves as a coordination point for Mg(2+). K(+) is bound at residue Glu-43. L-methionine contacts are provided by Glu-56 and Gln-99. The interval 99–109 is flexible loop; the sequence is QSPDINLGVSR. ATP-binding positions include 162 to 164, 228 to 229, Asp-237, 243 to 244, Ala-260, and Lys-264; these read DGK, RF, and RK. L-methionine is bound at residue Asp-237. Lys-268 is an L-methionine binding site.

The protein belongs to the AdoMet synthase family. Homotetramer; dimer of dimers. Mg(2+) serves as cofactor. The cofactor is K(+).

The protein resides in the cytoplasm. The catalysed reaction is L-methionine + ATP + H2O = S-adenosyl-L-methionine + phosphate + diphosphate. It functions in the pathway amino-acid biosynthesis; S-adenosyl-L-methionine biosynthesis; S-adenosyl-L-methionine from L-methionine: step 1/1. Functionally, catalyzes the formation of S-adenosylmethionine (AdoMet) from methionine and ATP. The overall synthetic reaction is composed of two sequential steps, AdoMet formation and the subsequent tripolyphosphate hydrolysis which occurs prior to release of AdoMet from the enzyme. The chain is S-adenosylmethionine synthase 1 from Rhodopseudomonas palustris (strain BisB18).